The following is a 115-amino-acid chain: NAD(P)H-quinone oxidoreductase subunit M (115 aa).

This sequence belongs to the complex I NdhM subunit family. NDH-1 can be composed of about 15 different subunits; different subcomplexes with different compositions have been identified which probably have different functions.

Its subcellular location is the cellular thylakoid membrane. It carries out the reaction a plastoquinone + NADH + (n+1) H(+)(in) = a plastoquinol + NAD(+) + n H(+)(out). It catalyses the reaction a plastoquinone + NADPH + (n+1) H(+)(in) = a plastoquinol + NADP(+) + n H(+)(out). NDH-1 shuttles electrons from an unknown electron donor, via FMN and iron-sulfur (Fe-S) centers, to quinones in the respiratory and/or the photosynthetic chain. The immediate electron acceptor for the enzyme in this species is believed to be plastoquinone. Couples the redox reaction to proton translocation, and thus conserves the redox energy in a proton gradient. Cyanobacterial NDH-1 also plays a role in inorganic carbon-concentration. The chain is NAD(P)H-quinone oxidoreductase subunit M from Prochlorococcus marinus (strain MIT 9211).